The primary structure comprises 419 residues: tRNA (guanine-N(7)-)-methyltransferase non-catalytic subunit wuho (419 aa).

Positions 51–61 (STAEQQSAAAE) are enriched in low complexity. Residues 51-75 (STAEQQSAAAETGGGSVVEGEEPKD) are disordered. 3 WD repeats span residues 87–127 (APTV…AQLV), 174–213 (GHLS…DIHS), and 217–255 (GHKE…ELLR).

The protein belongs to the WD repeat TRM82 family. In terms of assembly, forms a heterodimer with the catalytic subunit Mettl1. Interacts with mei-P26 and weakly interacts with bgcn; required for the function or formation of the mei-P26-bgcn-bam-sxl complex. Interacts with nanos; may be involved in mei-P26-dependent derepression of the BMP signaling pathway. Interacts with Myc; the interaction may be mediated by mei-P26 and may be involved in the regulation of ribosome biogenesis. As to expression, in testis, it is present at high level in hub cells, a niche for germline stem cells of testis. Ubiquitously expressed in all testicular cells throughout spermatogenesis. Ubiquitously expressed in all germline and somatic cells of the ovary.

It is found in the nucleus. The protein resides in the cytoplasm. The protein operates within tRNA modification; N(7)-methylguanine-tRNA biosynthesis. Required for the Mettl1-dependent formation of N(7)-methylguanine at position 46 (m7G46) in tRNA. In the Mettl1-wuho methyltransferase complex, it is required to stabilize and induce conformational changes of the catalytic subunit. Required for binding of nanos mRNA and repression of translation by the mei-P26-bgcn-bam-sxl complex. May cooperate with mei-P26 and nanos to derepress the BMP signaling pathway. May cooperate with mei-P26 to suppress expression of a subset of microRNAs. May cooperate with mei-P26 to regulate bam expression levels in germline cells during gametogenesis. Required to promote mitosis to meiosis transition during gametogenesis. May regulate germline cell division in part by regulating ribosome biogenesis. The chain is tRNA (guanine-N(7)-)-methyltransferase non-catalytic subunit wuho from Drosophila willistoni (Fruit fly).